Reading from the N-terminus, the 311-residue chain is Bifunctional protein FolD (311 aa).

NADP(+) is bound by residues 184-186 (GAS), Ile-209, and Ile-250.

This sequence belongs to the tetrahydrofolate dehydrogenase/cyclohydrolase family. Homodimer.

It carries out the reaction (6R)-5,10-methylene-5,6,7,8-tetrahydrofolate + NADP(+) = (6R)-5,10-methenyltetrahydrofolate + NADPH. It catalyses the reaction (6R)-5,10-methenyltetrahydrofolate + H2O = (6R)-10-formyltetrahydrofolate + H(+). It functions in the pathway one-carbon metabolism; tetrahydrofolate interconversion. Functionally, catalyzes the oxidation of 5,10-methylenetetrahydrofolate to 5,10-methenyltetrahydrofolate and then the hydrolysis of 5,10-methenyltetrahydrofolate to 10-formyltetrahydrofolate. The chain is Bifunctional protein FolD from Gluconacetobacter diazotrophicus (strain ATCC 49037 / DSM 5601 / CCUG 37298 / CIP 103539 / LMG 7603 / PAl5).